Reading from the N-terminus, the 337-residue chain is Inositol 2-dehydrogenase (337 aa).

It belongs to the Gfo/Idh/MocA family. Homotetramer.

It catalyses the reaction myo-inositol + NAD(+) = scyllo-inosose + NADH + H(+). Functionally, involved in the oxidation of myo-inositol (MI) to 2-keto-myo-inositol (2KMI or 2-inosose). This is Inositol 2-dehydrogenase from Corynebacterium glutamicum (strain R).